The primary structure comprises 656 residues: MTDPLIPAVLVFRDNGTPFSPLYDDIYHSAVGGLEQARYVFLRGNSLPDRWQGRRIFTVLETGFGMGINFLMTWAAWRADPLRCERLHFVSTEKHPFTVGDLRKAVAATISDPEIAALAQALANAWPTLVPGTHRLEFDEGRVVLTLVFGDAQERLPALRLRADAFYLDGFAPARNPELWTPMIFKALARLAGEGATFATCSSAGDIKRALIQCGFEYRKVDGFGWKRAMLVGHFAPRWRVRRHEPPAPLAVDERHAVVIGAGLAGCAVIERLAARGWRVTSLERHASVAQEASGNPAGVFHPMISRDDSIASRVTRAGFLYTLRRWAALERLGHAPLRGGQGLLQIAADENEARSISEAIAAFGYPGDYVTPVSAAEAQRLAGMPLARGGWFFPHGGWIDPASLCAAQCAAAGPLLERRFGVDVARIERSGGQWTVFDTSGEAIARAPVVIVASAHDAARIAGLQHAPTRSIRGQLTLLPPGAVLPPLQMPVIGEGYAVPLADGVTLTGATYELDDPDTSLRADGHLENLERVAQMLPAFANVADPARSTALTGRVAFRCVTSDRMPMIGQLADEAQAALDAQRLRGAWPLDLPRTDGLYGAFAYGSRGLVWAALGAELIASQLEGEPWPLERDLAEDIDPARFLLRALRQGAVS.

The interval 1–236 is tRNA (mnm(5)s(2)U34)-methyltransferase; it reads MTDPLIPAVL…KRAMLVGHFA (236 aa). The tract at residues 260-656 is FAD-dependent cmnm(5)s(2)U34 oxidoreductase; the sequence is IGAGLAGCAV…LRALRQGAVS (397 aa).

It in the N-terminal section; belongs to the methyltransferase superfamily. tRNA (mnm(5)s(2)U34)-methyltransferase family. The protein in the C-terminal section; belongs to the DAO family. FAD is required as a cofactor.

It is found in the cytoplasm. It catalyses the reaction 5-aminomethyl-2-thiouridine(34) in tRNA + S-adenosyl-L-methionine = 5-methylaminomethyl-2-thiouridine(34) in tRNA + S-adenosyl-L-homocysteine + H(+). In terms of biological role, catalyzes the last two steps in the biosynthesis of 5-methylaminomethyl-2-thiouridine (mnm(5)s(2)U) at the wobble position (U34) in tRNA. Catalyzes the FAD-dependent demodification of cmnm(5)s(2)U34 to nm(5)s(2)U34, followed by the transfer of a methyl group from S-adenosyl-L-methionine to nm(5)s(2)U34, to form mnm(5)s(2)U34. The polypeptide is tRNA 5-methylaminomethyl-2-thiouridine biosynthesis bifunctional protein MnmC (Paraburkholderia phytofirmans (strain DSM 17436 / LMG 22146 / PsJN) (Burkholderia phytofirmans)).